The primary structure comprises 249 residues: MTIQQTELQELPLDLKRELLPKHVAVIMDGNGRWAKRQGLPRIMGHKRGVDALKDLLRCCRDWGIQALTAYAFSTENWKRPQEEVEFLMTLFQRVLRQELREMVEENVQIQFVGNLAALPRSLQAEISRSMEATKNNRGIRFSVATNYGGRQEILQACRAIAQKVQQGLLQPDEIDEEVFERHLYTAGIADPDLLIRTSGEMRLSNFLLWQMAYGEIYITDTLWPDFDRTEFHRALCAYQQRERRFGKV.

The active site involves aspartate 29. Residue aspartate 29 coordinates Mg(2+). Residues glycine 30–arginine 33, tryptophan 34, arginine 42, histidine 46, and serine 74–glutamate 76 contribute to the substrate site. Asparagine 77 (proton acceptor) is an active-site residue. Residues tryptophan 78, arginine 80, arginine 197, and arginine 203–serine 205 each bind substrate. Glutamate 216 is a Mg(2+) binding site.

This sequence belongs to the UPP synthase family. As to quaternary structure, homodimer. Requires Mg(2+) as cofactor.

Functionally, catalyzes the condensation of isopentenyl diphosphate (IPP) with allylic pyrophosphates generating different type of terpenoids. This chain is Isoprenyl transferase, found in Trichormus variabilis (strain ATCC 29413 / PCC 7937) (Anabaena variabilis).